Reading from the N-terminus, the 501-residue chain is Postreplication repair E3 ubiquitin-protein ligase rad18 (501 aa).

The RING-type zinc finger occupies 34–72; the sequence is CHVCKDFYDSPMLTSCNHTFCSLCIRRCLSVDSKCPLCR. The interval 111-154 is disordered; sequence QAILPDQAGPSSPSKRKATEMEGPKEEDPESKRPRRSTRSTRAR. A compositionally biased stretch (basic and acidic residues) spans 127 to 142; the sequence is KATEMEGPKEEDPESK. The segment covering 143–152 has biased composition (basic residues); the sequence is RPRRSTRSTR. The UBZ4-type zinc-finger motif lies at 186–214; the sequence is LVACPICLTRMKEQQVDRHLDTSCPGSPQ. Positions 189, 192, 204, and 209 each coordinate Zn(2+). Residues 203–250 are disordered; the sequence is RHLDTSCPGSPQAASKRRPIPAQTPQPSTFPSFNTRLTSQTNQKPPER. Over residues 225–246 the composition is skewed to polar residues; that stretch reads QTPQPSTFPSFNTRLTSQTNQK. One can recognise an SAP domain in the interval 256–290; it reads YSMLRDTALRKKLSELGLSTHGSRQLLEKRHKEWI. Residues 377-501 form a disordered region; the sequence is IKRQTLDGNG…GMKKPNPETC (125 aa).

It belongs to the RAD18 family. As to quaternary structure, interacts with E2 mus-8/ubc2, forming a complex with ubiquitin ligase activity.

The protein resides in the nucleus. The enzyme catalyses S-ubiquitinyl-[E2 ubiquitin-conjugating enzyme]-L-cysteine + [acceptor protein]-L-lysine = [E2 ubiquitin-conjugating enzyme]-L-cysteine + N(6)-ubiquitinyl-[acceptor protein]-L-lysine.. It functions in the pathway protein modification; protein ubiquitination. Its function is as follows. E3 RING-finger protein, member of the UBC2/RAD6 epistasis group. Associates to the E2 ubiquitin conjugating enzyme mus-8/ubc2 to form the mus-8/ubc2-uvs-2/rad18 ubiquitin ligase complex involved in postreplicative repair (PRR) of damaged DNA. The chain is Postreplication repair E3 ubiquitin-protein ligase rad18 (uvs-2) from Neurospora crassa (strain ATCC 24698 / 74-OR23-1A / CBS 708.71 / DSM 1257 / FGSC 987).